The chain runs to 167 residues: ATP synthase subunit b (167 aa).

A helical membrane pass occupies residues 9–29 (ALPLGNMLFIIIAFLLLMLIL).

The protein belongs to the ATPase B chain family. F-type ATPases have 2 components, F(1) - the catalytic core - and F(0) - the membrane proton channel. F(1) has five subunits: alpha(3), beta(3), gamma(1), delta(1), epsilon(1). F(0) has three main subunits: a(1), b(2) and c(10-14). The alpha and beta chains form an alternating ring which encloses part of the gamma chain. F(1) is attached to F(0) by a central stalk formed by the gamma and epsilon chains, while a peripheral stalk is formed by the delta and b chains.

The protein resides in the cell membrane. Its function is as follows. F(1)F(0) ATP synthase produces ATP from ADP in the presence of a proton or sodium gradient. F-type ATPases consist of two structural domains, F(1) containing the extramembraneous catalytic core and F(0) containing the membrane proton channel, linked together by a central stalk and a peripheral stalk. During catalysis, ATP synthesis in the catalytic domain of F(1) is coupled via a rotary mechanism of the central stalk subunits to proton translocation. In terms of biological role, component of the F(0) channel, it forms part of the peripheral stalk, linking F(1) to F(0). The polypeptide is ATP synthase subunit b (Leuconostoc mesenteroides subsp. mesenteroides (strain ATCC 8293 / DSM 20343 / BCRC 11652 / CCM 1803 / JCM 6124 / NCDO 523 / NBRC 100496 / NCIMB 8023 / NCTC 12954 / NRRL B-1118 / 37Y)).